The following is a 253-amino-acid chain: Imidazole glycerol phosphate synthase subunit HisF (253 aa).

Catalysis depends on residues Asp11 and Asp130.

The protein belongs to the HisA/HisF family. In terms of assembly, heterodimer of HisH and HisF.

The protein resides in the cytoplasm. The catalysed reaction is 5-[(5-phospho-1-deoxy-D-ribulos-1-ylimino)methylamino]-1-(5-phospho-beta-D-ribosyl)imidazole-4-carboxamide + L-glutamine = D-erythro-1-(imidazol-4-yl)glycerol 3-phosphate + 5-amino-1-(5-phospho-beta-D-ribosyl)imidazole-4-carboxamide + L-glutamate + H(+). Its pathway is amino-acid biosynthesis; L-histidine biosynthesis; L-histidine from 5-phospho-alpha-D-ribose 1-diphosphate: step 5/9. IGPS catalyzes the conversion of PRFAR and glutamine to IGP, AICAR and glutamate. The HisF subunit catalyzes the cyclization activity that produces IGP and AICAR from PRFAR using the ammonia provided by the HisH subunit. In Geotalea daltonii (strain DSM 22248 / JCM 15807 / FRC-32) (Geobacter daltonii), this protein is Imidazole glycerol phosphate synthase subunit HisF.